A 514-amino-acid polypeptide reads, in one-letter code: Type-2 serine--tRNA ligase (514 aa).

Ala-313 provides a ligand contact to L-serine. Residue Cys-315 coordinates Zn(2+). Arg-344 is an L-serine binding site. ATP is bound by residues 344–346 (RWE) and 355–356 (RV). 361–363 (RGE) contacts L-serine. Positions 363 and 470 each coordinate Zn(2+). Arg-477 provides a ligand contact to ATP.

The protein belongs to the class-II aminoacyl-tRNA synthetase family. Type-2 seryl-tRNA synthetase subfamily. Homodimer. It depends on Zn(2+) as a cofactor.

It localises to the cytoplasm. It catalyses the reaction tRNA(Ser) + L-serine + ATP = L-seryl-tRNA(Ser) + AMP + diphosphate + H(+). The enzyme catalyses tRNA(Sec) + L-serine + ATP = L-seryl-tRNA(Sec) + AMP + diphosphate + H(+). It participates in aminoacyl-tRNA biosynthesis; selenocysteinyl-tRNA(Sec) biosynthesis; L-seryl-tRNA(Sec) from L-serine and tRNA(Sec): step 1/1. Catalyzes the attachment of serine to tRNA(Ser). Is also able to aminoacylate tRNA(Sec) with serine, to form the misacylated tRNA L-seryl-tRNA(Sec), which will be further converted into selenocysteinyl-tRNA(Sec). The polypeptide is Type-2 serine--tRNA ligase (Methanococcus maripaludis (strain C6 / ATCC BAA-1332)).